Here is a 144-residue protein sequence, read N- to C-terminus: Large ribosomal subunit protein uL15 (144 aa).

The tract at residues 1–58 (MKLNTLSPAAGAKHAAKRVGRGIGSGLGKTAGRGHKGQKSRSGGSIRPGFEGGQMPLK) is disordered. The span at 21–31 (RGIGSGLGKTA) shows a compositional bias: gly residues.

This sequence belongs to the universal ribosomal protein uL15 family. Part of the 50S ribosomal subunit.

In terms of biological role, binds to the 23S rRNA. This Psychromonas ingrahamii (strain DSM 17664 / CCUG 51855 / 37) protein is Large ribosomal subunit protein uL15.